The primary structure comprises 391 residues: Apolipoprotein A-IV (391 aa).

Residues 1-20 (MFLKAVVLTVALVAITGTQA) form the signal peptide. 13 tandem repeats follow at residues 33–54 (DYFT…KTDV), 60–81 (TLFQ…NKLV), 82–103 (PFAV…EEIQ), 115–136 (PHAN…EHLR), 137–158 (PYAT…RQLT), 159–180 (PYIQ…SSMV), 181–202 (PFAN…GQLT), 203–224 (PRAN…SRLA), 225–246 (PLAE…FQMK), 247–268 (KNAE…KNLA), 269–286 (PLVE…EGLQ), 287–308 (KSLE…RAVE), and 309–330 (PLGD…QQLG). Positions 33–330 (DYFTQLSNNA…QMEKFRQQLG (298 aa)) are 13 X 22 AA approximate tandem repeats. Ser-333 bears the Phosphoserine mark. The disordered stretch occupies residues 354–391 (FMSTLQKKGSPDQPLALPLPEQVQEQVQEQVQPKPLES). Residues 371–391 (PLPEQVQEQVQEQVQPKPLES) show a composition bias toward low complexity.

This sequence belongs to the apolipoprotein A1/A4/E family. In terms of assembly, homodimer. Secreted in plasma.

The protein resides in the secreted. In terms of biological role, may have a role in chylomicrons and VLDL secretion and catabolism. Required for efficient activation of lipoprotein lipase by ApoC-II; potent activator of LCAT. Apoa-IV is a major component of HDL and chylomicrons. The polypeptide is Apolipoprotein A-IV (Apoa4) (Rattus norvegicus (Rat)).